A 264-amino-acid polypeptide reads, in one-letter code: uncharacterized protein (264 aa).

An N-terminal signal peptide occupies residues 1–22 (MKRKLTICLLIALIFYNGNAKA). Residues 227 to 247 (LLWVIITTGSIIITALTYVGY) traverse the membrane as a helical segment.

It localises to the membrane. This is an uncharacterized protein from Bacillus subtilis (strain 168).